A 923-amino-acid polypeptide reads, in one-letter code: Alanine--tRNA ligase (923 aa).

4 residues coordinate Zn(2+): His611, His615, Cys714, and His718.

This sequence belongs to the class-II aminoacyl-tRNA synthetase family. Requires Zn(2+) as cofactor.

It is found in the cytoplasm. It carries out the reaction tRNA(Ala) + L-alanine + ATP = L-alanyl-tRNA(Ala) + AMP + diphosphate. Functionally, catalyzes the attachment of alanine to tRNA(Ala) in a two-step reaction: alanine is first activated by ATP to form Ala-AMP and then transferred to the acceptor end of tRNA(Ala). Also edits incorrectly charged Ser-tRNA(Ala) and Gly-tRNA(Ala) via its editing domain. In Methanosarcina barkeri (strain Fusaro / DSM 804), this protein is Alanine--tRNA ligase.